Here is a 202-residue protein sequence, read N- to C-terminus: ATP-dependent Clp protease proteolytic subunit (202 aa).

The active-site Nucleophile is the Ser-106. Residue His-131 is part of the active site.

Belongs to the peptidase S14 family. In terms of assembly, fourteen ClpP subunits assemble into 2 heptameric rings which stack back to back to give a disk-like structure with a central cavity, resembling the structure of eukaryotic proteasomes.

The protein localises to the cytoplasm. The catalysed reaction is Hydrolysis of proteins to small peptides in the presence of ATP and magnesium. alpha-casein is the usual test substrate. In the absence of ATP, only oligopeptides shorter than five residues are hydrolyzed (such as succinyl-Leu-Tyr-|-NHMec, and Leu-Tyr-Leu-|-Tyr-Trp, in which cleavage of the -Tyr-|-Leu- and -Tyr-|-Trp bonds also occurs).. Functionally, cleaves peptides in various proteins in a process that requires ATP hydrolysis. Has a chymotrypsin-like activity. Plays a major role in the degradation of misfolded proteins. The polypeptide is ATP-dependent Clp protease proteolytic subunit (Albidiferax ferrireducens (strain ATCC BAA-621 / DSM 15236 / T118) (Rhodoferax ferrireducens)).